The chain runs to 384 residues: 8-amino-7-oxononanoate synthase (384 aa).

Arg21 is a substrate binding site. Pyridoxal 5'-phosphate is bound at residue 108-109 (GF). His133 contributes to the substrate binding site. The pyridoxal 5'-phosphate site is built by Ser179, His207, and Thr233. Lys236 is modified (N6-(pyridoxal phosphate)lysine). Thr352 serves as a coordination point for substrate.

This sequence belongs to the class-II pyridoxal-phosphate-dependent aminotransferase family. BioF subfamily. As to quaternary structure, homodimer. The cofactor is pyridoxal 5'-phosphate.

It carries out the reaction 6-carboxyhexanoyl-[ACP] + L-alanine + H(+) = (8S)-8-amino-7-oxononanoate + holo-[ACP] + CO2. The protein operates within cofactor biosynthesis; biotin biosynthesis. In terms of biological role, catalyzes the decarboxylative condensation of pimeloyl-[acyl-carrier protein] and L-alanine to produce 8-amino-7-oxononanoate (AON), [acyl-carrier protein], and carbon dioxide. In Shigella sonnei (strain Ss046), this protein is 8-amino-7-oxononanoate synthase.